A 254-amino-acid polypeptide reads, in one-letter code: 5-oxoprolinase subunit A (254 aa).

The protein belongs to the LamB/PxpA family. In terms of assembly, forms a complex composed of PxpA, PxpB and PxpC.

It carries out the reaction 5-oxo-L-proline + ATP + 2 H2O = L-glutamate + ADP + phosphate + H(+). Catalyzes the cleavage of 5-oxoproline to form L-glutamate coupled to the hydrolysis of ATP to ADP and inorganic phosphate. This chain is 5-oxoprolinase subunit A, found in Rhodopseudomonas palustris (strain ATCC BAA-98 / CGA009).